The chain runs to 167 residues: ATP synthase subunit b (167 aa).

The helical transmembrane segment at 7-25 threads the bilayer; sequence SFWLTISFVIFVYLIYRPA.

It belongs to the ATPase B chain family. As to quaternary structure, F-type ATPases have 2 components, F(1) - the catalytic core - and F(0) - the membrane proton channel. F(1) has five subunits: alpha(3), beta(3), gamma(1), delta(1), epsilon(1). F(0) has three main subunits: a(1), b(2) and c(10-14). The alpha and beta chains form an alternating ring which encloses part of the gamma chain. F(1) is attached to F(0) by a central stalk formed by the gamma and epsilon chains, while a peripheral stalk is formed by the delta and b chains.

The protein localises to the cell inner membrane. In terms of biological role, f(1)F(0) ATP synthase produces ATP from ADP in the presence of a proton or sodium gradient. F-type ATPases consist of two structural domains, F(1) containing the extramembraneous catalytic core and F(0) containing the membrane proton channel, linked together by a central stalk and a peripheral stalk. During catalysis, ATP synthesis in the catalytic domain of F(1) is coupled via a rotary mechanism of the central stalk subunits to proton translocation. Its function is as follows. Component of the F(0) channel, it forms part of the peripheral stalk, linking F(1) to F(0). This Rickettsia prowazekii (strain Madrid E) protein is ATP synthase subunit b.